A 553-amino-acid chain; its full sequence is MNIIDQVKQTLVEEIAASINKAGLADEIPDIKIEVPKDTKNGDYATNIAMVLTKIAKRNPREIAQAIVDNLDTEKAHVKQIDIAGPGFINFYLDNQYLTAIIPEAIEKGDQFGHVNESKGQNVLLEYVSANPTGDLHIGHARNAAVGDALANILTAAGYNVTREYYINDAGNQITNLARSIETRFFEALGDNSYSMPEDGYNGKDIIEIGKDLAEKHPEIKDYSEEARLKEFRKLGVEYEMAKLKNDLAEFNTHFDNWFSETSLYEKGEILEVLAKMKELGYTYEADGATWLRTTDFKDDKDRVLIKNDGTYTYFLPDIAYHFDKVKRGNDILIDLFGADHHGYINRLKASLETFGVDSNRLEIQIMQMVRLMENGKEVKMSKRTGNAITLREIMDEVGVDAARYFLTMRSPDSHFDFDMELAKEQSQDNPVYYAQYAHARICSILKQAKEQGIEVAAANDFTTITNEKAIELLKKVADFEPTIESAAEHRSAHRITNYIQDLASHFHKFYNAEKVLTDDIEKTKAHVAMIEAVRITLKNALAMVGVSAPESM.

The 'HIGH' region motif lies at 130 to 140 (ANPTGDLHIGH).

Belongs to the class-I aminoacyl-tRNA synthetase family. In terms of assembly, monomer.

Its subcellular location is the cytoplasm. It catalyses the reaction tRNA(Arg) + L-arginine + ATP = L-arginyl-tRNA(Arg) + AMP + diphosphate. This is Arginine--tRNA ligase from Staphylococcus aureus (strain MRSA252).